A 381-amino-acid chain; its full sequence is MPTHLRFRRRSFLGLLFLFSLSTSALYFIYSAPGIVNEYLFMVQARGIQIRENVRNMGAQVLEQVVRSAYSINGTDYTYEFNFSETDASPTPFLPEGFTYKPEQVCPEKLPSMKGRLKVNMSEIALDEVEKLLKLNDPGLSVGGHWKPHDCRPRWKVAILVPFRNRHEHLPILFRHLIPALQRQRLQFGFYVIEQAGNEPFNRAMLFNVGFKEAMKDLNWDCVIFHDVDHILENDRNYYGCGEMPRHFAVKLNKYSYMLPYEEFFGGVSGLTVKQFKRINGFPNAFWGWGGEDDDLWNRVQFAGYKVSRPHGELGRYMSIPHHHRGEVQFLGRYKLLRRSKERQSLDGLNNLNYSPLVSRRSLYTNVSVTLSRDLAPVADY.

The Cytoplasmic segment spans residues Met1–Ser11. Residues Phe12–Ala32 traverse the membrane as a helical; Signal-anchor for type II membrane protein segment. The Lumenal portion of the chain corresponds to Pro33–Tyr381. Asn73, Asn82, and Asn120 each carry an N-linked (GlcNAc...) asparagine glycan. A disulfide bridge links Cys106 with Cys151. UDP-alpha-D-galactose is bound by residues Pro162–Arg166, Phe201–Arg203, Val228–Asp229, Tyr257, and Trp289. Cys222 and Cys241 form a disulfide bridge. Residue Asp229 participates in Mn(2+) binding. Gly291 to Asp294 is an N-acetyl-D-glucosamine binding site. His322 is a binding site for Mn(2+). A UDP-alpha-D-galactose-binding site is contributed by His322–His323. Arg333 is a binding site for N-acetyl-D-glucosamine. Residue Asn366 is glycosylated (N-linked (GlcNAc...) asparagine).

It belongs to the glycosyltransferase 7 family. It depends on Mn(2+) as a cofactor.

It is found in the golgi apparatus. Its subcellular location is the golgi stack membrane. The enzyme catalyses a beta-D-glucosyl-(1&lt;-&gt;1')-N-acylsphing-4-enine + UDP-alpha-D-galactose = a beta-D-Gal-(1-&gt;4)-beta-D-Glc-(1&lt;-&gt;1)-Cer(d18:1(4E)) + UDP + H(+). The protein operates within protein modification; protein glycosylation. It functions in the pathway sphingolipid metabolism. Its function is as follows. Catalyzes the synthesis of lactosylceramide (LacCer) via the transfer of galactose from UDP-galactose to glucosylceramide (GlcCer). Required for proper patterning of the dorsoventral axis during embryogenesis through the regulation of BMP signaling. Plays a role in proteoglycan glycosylation that is required for BMP-dependent specification of the dorsoventral axis. This is Beta-1,4-galactosyltransferase 5 (b4galt5) from Danio rerio (Zebrafish).